A 553-amino-acid polypeptide reads, in one-letter code: Zinc finger matrin-type protein 1 (553 aa).

Positions 16–36 (TPSSPAATCSGPMAGGDTSSN) are disordered. 4 Matrin-type zinc fingers span residues 61-91 (TFCK…KVRL), 125-155 (KFCG…KMRQ), 223-253 (KYCK…NQAR), and 275-305 (YVCP…KESM). Disordered stretches follow at residues 341–402 (QFRQ…DQRV) and 428–553 (HISR…ILGF). Acidic residues predominate over residues 350–362 (DSCDYEEEEEQEP). Low complexity predominate over residues 431–453 (RSPTSQDSSDNSSGSSSDESSGS). Residues 456 to 476 (KDKRRKRKHHRESRLRGSGRI) are compositionally biased toward basic residues. Residues 477–513 (RRGDENSEKRKRKGEDADSGKEDNKHDRGKTSGGDKD) show a composition bias toward basic and acidic residues.

The protein resides in the nucleus. This Xenopus tropicalis (Western clawed frog) protein is Zinc finger matrin-type protein 1 (zmat1).